Here is a 488-residue protein sequence, read N- to C-terminus: 3-octaprenyl-4-hydroxybenzoate carboxy-lyase (488 aa).

N172 is a Mn(2+) binding site. Residues 175 to 177 (IYR), 189 to 191 (RWL), and 194 to 195 (RG) contribute to the prenylated FMN site. Position 238 (E238) interacts with Mn(2+). The Proton donor role is filled by D287.

The protein belongs to the UbiD family. As to quaternary structure, homohexamer. Prenylated FMN is required as a cofactor. The cofactor is Mn(2+).

The protein resides in the cell membrane. It carries out the reaction a 4-hydroxy-3-(all-trans-polyprenyl)benzoate + H(+) = a 2-(all-trans-polyprenyl)phenol + CO2. It participates in cofactor biosynthesis; ubiquinone biosynthesis. Functionally, catalyzes the decarboxylation of 3-octaprenyl-4-hydroxy benzoate to 2-octaprenylphenol, an intermediate step in ubiquinone biosynthesis. In Stutzerimonas stutzeri (strain A1501) (Pseudomonas stutzeri), this protein is 3-octaprenyl-4-hydroxybenzoate carboxy-lyase.